Here is a 528-residue protein sequence, read N- to C-terminus: Probable serine/threonine-protein kinase DDB_G0282417 (528 aa).

The span at 49 to 77 shows a compositional bias: low complexity; it reads NNNNNNNNNNNNNNNNNNNNNNNNNNKNN. A disordered region spans residues 49–84; the sequence is NNNNNNNNNNNNNNNNNNNNNNNNNNKNNNDGDDAA. One can recognise a Protein kinase domain in the interval 136–466; the sequence is QQNRVLIGEG…ESLINNHQYS (331 aa). Residues 142-150 and Lys-166 each bind ATP; that span reads IGEGHYGKV. Asp-266 acts as the Proton acceptor in catalysis.

It belongs to the protein kinase superfamily. Ser/Thr protein kinase family.

It catalyses the reaction L-seryl-[protein] + ATP = O-phospho-L-seryl-[protein] + ADP + H(+). The catalysed reaction is L-threonyl-[protein] + ATP = O-phospho-L-threonyl-[protein] + ADP + H(+). This chain is Probable serine/threonine-protein kinase DDB_G0282417, found in Dictyostelium discoideum (Social amoeba).